Here is a 790-residue protein sequence, read N- to C-terminus: Ribosome biogenesis protein ERB1 (790 aa).

The disordered stretch occupies residues 1–93 (MAKKNTVTGS…SDELQDDSNS (93 aa)). Acidic residues predominate over residues 20-89 (SPEVSESEEI…SEDFSDELQD (70 aa)). The segment at 255–371 (RFVPSKHEAK…LRKVPAYQEN (117 aa)) is required for interaction with NOP7. Positions 371 to 407 (NLRERFERSLDLYLAPRVRHNKLNIDPDSLIPDLPSP) are required for interaction with YTM1. WD repeat units lie at residues 423–462 (GHIG…QVYH), 470–510 (KDDD…YEIE), 574–616 (QCRK…SQSP), 619–657 (KSKG…LTKK), 660–699 (PGAR…TPYK), 703–743 (YHEK…DLMT), and 759–790 (VHSL…LWTT).

The protein belongs to the WD repeat BOP1/ERB1 family. Component of the NOP7 complex, composed of ERB1, NOP7 and YTM1. The complex is held together by ERB1, which interacts with NOP7 via its N-terminal domain and with YTM1 via a high-affinity interaction between the seven-bladed beta-propeller domains of the 2 proteins. The NOP7 complex associates with the 66S pre-ribosome.

It localises to the nucleus. The protein resides in the nucleolus. Its subcellular location is the nucleoplasm. Functionally, component of the NOP7 complex, which is required for maturation of the 25S and 5.8S ribosomal RNAs and formation of the 60S ribosome. This chain is Ribosome biogenesis protein ERB1, found in Meyerozyma guilliermondii (strain ATCC 6260 / CBS 566 / DSM 6381 / JCM 1539 / NBRC 10279 / NRRL Y-324) (Yeast).